The following is a 181-amino-acid chain: Adenine phosphoribosyltransferase 2 (181 aa).

At S2 the chain carries N-acetylserine.

It belongs to the purine/pyrimidine phosphoribosyltransferase family.

The protein resides in the cytoplasm. The catalysed reaction is AMP + diphosphate = 5-phospho-alpha-D-ribose 1-diphosphate + adenine. The protein operates within purine metabolism; AMP biosynthesis via salvage pathway; AMP from adenine: step 1/1. Catalyzes a salvage reaction resulting in the formation of AMP, that is energically less costly than de novo synthesis. May lack catalytic activity. The protein is Adenine phosphoribosyltransferase 2 (APT2) of Saccharomyces cerevisiae (strain ATCC 204508 / S288c) (Baker's yeast).